Reading from the N-terminus, the 303-residue chain is MKSSASAPAKAILFGEHAVVYSKPAIAAAIDRRVTVTVSESSSTHVTIPSLGIRHSSERPSGGILDYIGRCLELYHDASPLDIRVEMEIPAGSGLGSSAALTVALIGALDRYHGRDHGPGETAARAHRVEVDVQGAASPLDTAISTYGGLVYLDSQRRVRQFEADLGDLVIAHLDYSGETARMVAGVAERFRRFPDIMGRIMDTVESITNTAYRELLRNNTEPLGELMNLNQGLLDSMGVSTRELSMMVYEARNAGAAGSKITGAGGGGSIIAHCPGCVDDVVTALNRNWKAMRAEFSVKGLI.

90–100 (PAGSGLGSSAA) is a binding site for ATP. The Proton acceptor role is filled by aspartate 141.

This sequence belongs to the GHMP kinase family. Mevalonate kinase subfamily. As to quaternary structure, homodimer. Mg(2+) is required as a cofactor.

The protein localises to the cytoplasm. The enzyme catalyses (R)-mevalonate + ATP = (R)-5-phosphomevalonate + ADP + H(+). The protein operates within isoprenoid biosynthesis; isopentenyl diphosphate biosynthesis via mevalonate pathway; isopentenyl diphosphate from (R)-mevalonate: step 1/3. Functionally, catalyzes the phosphorylation of (R)-mevalonate (MVA) to (R)-mevalonate 5-phosphate (MVAP). Functions in the mevalonate (MVA) pathway leading to isopentenyl diphosphate (IPP), a key precursor for the biosynthesis of isoprenoid compounds such as archaeal membrane lipids. This Methanothermobacter thermautotrophicus (strain ATCC 29096 / DSM 1053 / JCM 10044 / NBRC 100330 / Delta H) (Methanobacterium thermoautotrophicum) protein is Mevalonate kinase.